We begin with the raw amino-acid sequence, 337 residues long: Annexin E1 (337 aa).

Annexin repeat units follow at residues 10–80 (TGVT…MLYK), 81–154 (PRAQ…AVAT), 161–238 (DTHE…LAHD), and 242–312 (DPCC…LLWE).

Belongs to the annexin family.

It is found in the cell projection. The protein resides in the cilium. It localises to the flagellum. Functionally, may function as a calcium-regulated structural element linking phospholipid bilayer and underlying axoneme. The protein is Annexin E1 (ANXE1) of Giardia intestinalis (Giardia lamblia).